A 317-amino-acid chain; its full sequence is Neurogenic differentiation factor 6-B (317 aa).

Disordered regions lie at residues 1 to 90 (MLTV…ERSR) and 297 to 317 (DLHPRSQSFQSQDELNTGYHN). A compositionally biased stretch (acidic residues) spans 37-56 (EAEDDNTDREEEEEREEDEN). The segment covering 59-69 (PKKKGPRKKKS) has biased composition (basic residues). The Nuclear localization signal signature appears at 65–70 (RKKKSE). The segment covering 70–90 (EGRGDRVKMRRQEANARERSR) has biased composition (basic and acidic residues). Residues 78–130 (MRRQEANARERSRMHGLNDALESLRKVVPCYSKTQKLSKIETLRLAKNYIWAL) enclose the bHLH domain. A compositionally biased stretch (polar residues) spans 301 to 317 (RSQSFQSQDELNTGYHN).

In terms of assembly, efficient DNA binding requires dimerization with another bHLH protein. As to expression, embryonic olfactory bulbs and olfactory placodes. In adult, expressed in brain and eye.

Its subcellular location is the nucleus. Differentiation factor required for neurogenesis. Does not act as an upstream activator of isl1. This chain is Neurogenic differentiation factor 6-B, found in Danio rerio (Zebrafish).